The chain runs to 363 residues: uncharacterized protein (363 aa).

7 consecutive transmembrane segments (helical) span residues 20-40 (WFFTLVEMILAVGGLIMNTNI), 63-83 (INFAILSGFQLARNFFLFLVM), 101-121 (FPLIFCYIHCAASFFLLGVQS), 141-161 (SVWQSTIAAVCVALSLLFTAF), 186-206 (FSLLTLLILLHATGLIFIMLA), 227-247 (IFKYETLAWQISLFISGCVVL), and 268-288 (FLIVPLLISFMHPLYLIWYVL). The interval 329–363 (PRADLTPNDTLHMESKKKPLSQSPRVVIEEEDVAE) is disordered.

The protein resides in the membrane. This is an uncharacterized protein from Caenorhabditis elegans.